Here is a 169-residue protein sequence, read N- to C-terminus: MEEWDLLNENRELTGKTHIRGEKLAPGELHLVIHVCIFNEKGQLLIQKRQKDKEGWPNYWDLSAAGSALKGETSQQAAEREVQEELGIMIDLSGTRAKFSYHFEEGFDDYWFITKDVQLSDLTLQKEEVADARFVTKEELEALRSSGEFIPYFFLNQLFNLKNATTIHF.

The Nudix hydrolase domain occupies 28–157; that stretch reads ELHLVIHVCI…EFIPYFFLNQ (130 aa). The short motif at 65-87 is the Nudix box element; it reads AGSALKGETSQQAAEREVQEELG. Mg(2+)-binding residues include Glu-81 and Glu-85.

This sequence belongs to the Nudix hydrolase family. It depends on Mg(2+) as a cofactor.

This is an uncharacterized protein from Listeria monocytogenes serovar 1/2a (strain ATCC BAA-679 / EGD-e).